Reading from the N-terminus, the 367-residue chain is C-glycoside deglycosidase alpha subunit (367 aa).

Residue Glu146 coordinates Mg(2+). His148 serves as the catalytic Proton acceptor. The Mg(2+) site is built by Asp178, His276, and Glu312.

It belongs to the C-glycoside deglycosidase alpha subunit family. As to quaternary structure, heterodimer composed of an alpha subunit (CarB1) and a beta subunit (CarC1). Mg(2+) is required as a cofactor.

It catalyses the reaction 3''-dehydroisovitexin = 1,5-anhydro-D-erythro-hex-1-en-3-ulose + apigenin. With respect to regulation, activity is strongly reduced in the presence of chelating agents. Functionally, carbon-carbon bond-cleaving enzyme which participates in the metabolism of C-glycosides. Acts on the C6-glycosylated compound 3''-dehydroisovitexin (3''-oxo-isovitexin). Shows weak activity with 3''-dehydroisoorientin (3''-oxo-homoorientin) and 3'-dehydromangiferin (3'-oxo-mangiferin). The chain is C-glycoside deglycosidase alpha subunit from Arthrobacter globiformis (strain ATCC 8010 / DSM 20124 / JCM 1332 / NBRC 12137 / NCIMB 8907 / NRRL B-2979 / 168).